A 948-amino-acid chain; its full sequence is RNA polymerase-associated protein RapA (948 aa).

A Helicase ATP-binding domain is found at 164 to 332 (EVADRIAPRV…FARLRLLDPN (169 aa)). An ATP-binding site is contributed by 177 to 184 (DEVGLGKT). Positions 278-281 (DEAH) match the DEAH box motif. The region spanning 473 to 627 (RVDWLIDTLK…TCPTGNALQH (155 aa)) is the Helicase C-terminal domain.

It belongs to the SNF2/RAD54 helicase family. RapA subfamily. In terms of assembly, interacts with the RNAP. Has a higher affinity for the core RNAP than for the holoenzyme. Its ATPase activity is stimulated by binding to RNAP.

Its function is as follows. Transcription regulator that activates transcription by stimulating RNA polymerase (RNAP) recycling in case of stress conditions such as supercoiled DNA or high salt concentrations. Probably acts by releasing the RNAP, when it is trapped or immobilized on tightly supercoiled DNA. Does not activate transcription on linear DNA. Probably not involved in DNA repair. In Pseudomonas syringae pv. syringae (strain B728a), this protein is RNA polymerase-associated protein RapA.